An 870-amino-acid chain; its full sequence is Radial spoke head 10 homolog B (870 aa).

Over residues 1–16 (MVKEKKKADKKGEKSA) the composition is skewed to basic and acidic residues. The tract at residues 1–43 (MVKEKKKADKKGEKSARSPSSLSDNLDFSKQDGNTTRQEMSPA) is disordered. Over residues 17 to 39 (RSPSSLSDNLDFSKQDGNTTRQE) the composition is skewed to polar residues. 10 MORN repeats span residues 86–108 (YEGEKVRGLYEGEGFAAFQGGCT), 109–131 (YRGMFSEGLMHGQGTYIWADGLK), 132–154 (YEGDFVKNVPMNHGVYTWPDGSM), 155–177 (YEGEVVNGMRNGFGMFKCSTQPV), 179–201 (YIGHWCNGKRHGKGSIYYNQEGT), 204–226 (YEGDWVQNIKKGWGIRCYKSGNI), 227–249 (YEGQWEDNMRHGEGRMRWLTTNE), 251–273 (YTGRWERGIQNGFGTHTWFLKRI), 284–306 (YIGEFVNGYRHGRGKFYYASGAM), and 307–329 (YDGEWVSNKKHGMGRLTFKNGRV). The tract at residues 674-704 (NKSPSAVMSHESDAAHSDSARSSSSKLELSP) is disordered. The segment covering 683–692 (HESDAAHSDS) has biased composition (basic and acidic residues). Residues 693 to 703 (ARSSSSKLELS) show a composition bias toward low complexity. Positions 784 to 811 (KEKIRADRLRSTAQAQQRKMEDDELEAR) form a coiled coil. Residues 840 to 870 (VSSSHLILDPPKEDVTVSPSSKTITSKKKKK) form a disordered region.

As to quaternary structure, interacts with RSPH6A. Does not appear to be part of the axonemal radial spoke complexes 1 or 2.

The protein resides in the cytoplasm. It is found in the cytoskeleton. It localises to the cilium axoneme. The protein localises to the cell projection. Its subcellular location is the cilium. The protein resides in the flagellum. In terms of biological role, may function as part of the axonemal radial spoke complex 3 (RS3). Radial spoke complexes are important for ciliary motility. This Homo sapiens (Human) protein is Radial spoke head 10 homolog B (RSPH10B).